Here is an 880-residue protein sequence, read N- to C-terminus: Leucine--tRNA ligase (880 aa).

The short motif at 49-59 (PYPSGRIHMGH) is the 'HIGH' region element. The 'KMSKS' region signature appears at 638–642 (KMSKS). Lysine 641 is a binding site for ATP.

It belongs to the class-I aminoacyl-tRNA synthetase family.

It localises to the cytoplasm. It carries out the reaction tRNA(Leu) + L-leucine + ATP = L-leucyl-tRNA(Leu) + AMP + diphosphate. The sequence is that of Leucine--tRNA ligase from Bartonella quintana (strain Toulouse) (Rochalimaea quintana).